The sequence spans 151 residues: Urease accessory protein UreE (151 aa).

Belongs to the UreE family.

The protein localises to the cytoplasm. Involved in urease metallocenter assembly. Binds nickel. Probably functions as a nickel donor during metallocenter assembly. The protein is Urease accessory protein UreE of Lachnoclostridium phytofermentans (strain ATCC 700394 / DSM 18823 / ISDg) (Clostridium phytofermentans).